Consider the following 153-residue polypeptide: Ribonuclease H (153 aa).

Positions 1–142 (MTPEVVIYTD…ADALARKGLS (142 aa)) constitute an RNase H type-1 domain. Mg(2+) contacts are provided by Asp-10, Glu-48, Asp-70, and Asp-134.

Belongs to the RNase H family. In terms of assembly, monomer. Requires Mg(2+) as cofactor.

The protein resides in the cytoplasm. It catalyses the reaction Endonucleolytic cleavage to 5'-phosphomonoester.. Its function is as follows. Endonuclease that specifically degrades the RNA of RNA-DNA hybrids. This is Ribonuclease H from Phenylobacterium zucineum (strain HLK1).